A 39-amino-acid chain; its full sequence is Non-specific lipid-transfer protein (39 aa).

This sequence belongs to the plant LTP family.

Its function is as follows. Plant non-specific lipid-transfer proteins transfer phospholipids as well as galactolipids across membranes. May play a role in wax or cutin deposition in the cell walls of expanding epidermal cells and certain secretory tissues. This is Non-specific lipid-transfer protein from Musa acuminata (Banana).